Consider the following 164-residue polypeptide: UPF0178 protein BRADO3147 (164 aa).

Belongs to the UPF0178 family.

This is UPF0178 protein BRADO3147 from Bradyrhizobium sp. (strain ORS 278).